Reading from the N-terminus, the 1048-residue chain is Malignant fibrous histiocytoma-amplified sequence 1 homolog (1048 aa).

An N-acetylalanine modification is found at Ala-2. 13 LRR repeats span residues 60-81, 84-105, 108-129, 132-153, 155-176, 178-199, 201-222, 224-246, 247-268, 270-292, 293-314, 316-337, and 339-360; these read DIEV…LGSA, SLRV…VAEL, HLTE…VVSA, ELRK…LGAL, HLEE…FSCL, HLRT…LLQL, ALEE…ISAL, ALKI…CELA, SLES…FSRL, RLKM…LPLA, GLEE…IAGL, RLLT…IVEL, and GLEE…FGQL. The interval 60-360 is required for interaction with PJA2; the sequence is DIEVLNLGNN…AVLPDNFGQL (301 aa). The interval 60–645 is required for interaction with PPP2R2A; it reads DIEVLNLGNN…DKLLSVAEHR (586 aa). In terms of domain architecture, Roc spans 399-645; that stretch reads QPAVQPRLKL…DKLLSVAEHR (247 aa). The residue at position 597 (Lys-597) is an N6-acetyllysine.

As to quaternary structure, interacts with RAF1. Interacts with HSPD1. Interacts with PPP2CA; retains PPP2CA into the cytoplasm and excludes it from the nucleus. Interacts with PPP2R2A; the interaction is direct. Interacts with PJA2. In terms of processing, ubiquitinated. Ubiquitination by PJA2 does not lead MFHAS1 to proteasomal degradation but positively regulates its function in polarization of macrophages.

The protein localises to the cytoplasm. Functionally, probable GTP-binding protein. Functions in innate immunity and more specifically the inflammatory response as a regulator of the Toll-like receptor TLR2 and TLR4 signaling pathways. Negatively regulates the part of the TLR4 signaling pathway that leads to the activation of the transcription factor AP-1. By retaining the phosphatase complex PP2A into the cytoplasm, prevents the dephosphorylation of the AP-1 subunit JUN which is required for proper activation of the transcription factor. Both inhibits and activates the TLR2-dependent signaling pathway. Positively regulates the TLR2 signaling pathway to activate specifically the downstream p38 and JNK MAP kinases and promote the polarization of macrophages toward the pro-inflammatory M1 phenotype. It may also play a role in the regulation of inflammation induced by high glucose through the PKB/AKT signaling pathway. Also involved in erythrocyte differentiation through activation of the ERK1/ERK2 signaling pathway. This is Malignant fibrous histiocytoma-amplified sequence 1 homolog from Mus musculus (Mouse).